Here is a 321-residue protein sequence, read N- to C-terminus: Lipoyl synthase (321 aa).

Residues C68, C73, C79, C94, C98, C101, and S308 each contribute to the [4Fe-4S] cluster site. The region spanning 80-297 (FNHGTATFMI…KEIALELGFT (218 aa)) is the Radical SAM core domain.

The protein belongs to the radical SAM superfamily. Lipoyl synthase family. Requires [4Fe-4S] cluster as cofactor.

It is found in the cytoplasm. The enzyme catalyses [[Fe-S] cluster scaffold protein carrying a second [4Fe-4S](2+) cluster] + N(6)-octanoyl-L-lysyl-[protein] + 2 oxidized [2Fe-2S]-[ferredoxin] + 2 S-adenosyl-L-methionine + 4 H(+) = [[Fe-S] cluster scaffold protein] + N(6)-[(R)-dihydrolipoyl]-L-lysyl-[protein] + 4 Fe(3+) + 2 hydrogen sulfide + 2 5'-deoxyadenosine + 2 L-methionine + 2 reduced [2Fe-2S]-[ferredoxin]. Its pathway is protein modification; protein lipoylation via endogenous pathway; protein N(6)-(lipoyl)lysine from octanoyl-[acyl-carrier-protein]: step 2/2. Its function is as follows. Catalyzes the radical-mediated insertion of two sulfur atoms into the C-6 and C-8 positions of the octanoyl moiety bound to the lipoyl domains of lipoate-dependent enzymes, thereby converting the octanoylated domains into lipoylated derivatives. This chain is Lipoyl synthase, found in Aliivibrio fischeri (strain MJ11) (Vibrio fischeri).